The chain runs to 411 residues: Phosphopentomutase (411 aa).

Mn(2+) contacts are provided by aspartate 14, aspartate 306, histidine 311, aspartate 347, histidine 348, and histidine 359.

This sequence belongs to the phosphopentomutase family. The cofactor is Mn(2+).

It is found in the cytoplasm. The enzyme catalyses 2-deoxy-alpha-D-ribose 1-phosphate = 2-deoxy-D-ribose 5-phosphate. It catalyses the reaction alpha-D-ribose 1-phosphate = D-ribose 5-phosphate. It participates in carbohydrate degradation; 2-deoxy-D-ribose 1-phosphate degradation; D-glyceraldehyde 3-phosphate and acetaldehyde from 2-deoxy-alpha-D-ribose 1-phosphate: step 1/2. Its function is as follows. Isomerase that catalyzes the conversion of deoxy-ribose 1-phosphate (dRib-1-P) and ribose 1-phosphate (Rib-1-P) to deoxy-ribose 5-phosphate (dRib-5-P) and ribose 5-phosphate (Rib-5-P), respectively. This chain is Phosphopentomutase, found in Lactococcus lactis subsp. lactis (strain IL1403) (Streptococcus lactis).